Here is a 98-residue protein sequence, read N- to C-terminus: Lipolysis-activating peptide 1-alpha chain (98 aa).

The N-terminal stretch at 1–22 is a signal peptide; sequence MMKFVLFGMIVILFSLMGSIRG. An LCN-type CS-alpha/beta domain is found at 26–89; sequence PGNYPTNAYG…IWNAVKNHCT (64 aa). Intrachain disulfides connect Cys40/Cys63, Cys49/Cys68, and Cys53/Cys70. Asn96 bears the Asparagine amide mark.

It belongs to the long (3 C-C) scorpion toxin superfamily. In terms of assembly, monomer (edited version) and heterodimer (non-edited version) of this alpha chain and a beta chain (AC Q95P90). In terms of tissue distribution, expressed by the venom gland.

The protein resides in the secreted. The heterodimer non-edited LVP1 induces lipolysis in rat adipocytes. Induction of lipolysis by LVP1 appears to be mediated through the beta-2 adrenergic receptor pathway (ADRB2). Functionally, the edited BmKBTx, similar to beta-toxins, may modulate voltage-gated sodium channels (Nav) and may block voltage-gated potassium channels (Kv). Seems to be a rare component in the venom. This chain is Lipolysis-activating peptide 1-alpha chain (LVP1a), found in Olivierus martensii (Manchurian scorpion).